The following is a 298-amino-acid chain: Serine/threonine-protein kinase 1 (298 aa).

Residues 38-276 (FIATRPMFEG…FKSLVSHPWF (239 aa)) enclose the Protein kinase domain. ATP-binding positions include 45-53 (FEGGRNNVF) and K65. D152 acts as the Proton acceptor in catalysis.

The protein belongs to the protein kinase superfamily. Ser/Thr protein kinase family.

Its subcellular location is the virion. It is found in the host cytoplasm. It catalyses the reaction L-seryl-[protein] + ATP = O-phospho-L-seryl-[protein] + ADP + H(+). It carries out the reaction L-threonyl-[protein] + ATP = O-phospho-L-threonyl-[protein] + ADP + H(+). In terms of biological role, essential for viral replication. It may mediate the virus progression through DNA replication. The protein is Serine/threonine-protein kinase 1 of African swine fever virus (strain Badajoz 1971 Vero-adapted) (Ba71V).